The primary structure comprises 783 residues: Transcription factor E4F1 (783 aa).

Positions 40 to 84 are required for ubiquitin ligase activity; that stretch reads GFLGLPAPFSEEDEDDVHRCGRCQVEFTALEDFVQHKIQKTCHRA. The residue at position 49 (Ser-49) is a Phosphoserine. Positions 185-264 are mediates dimerization, DNA-binding, transcription repression of CCNA2 and interaction with HMGA2; sequence LLVNKEGRYV…GKSFRESGAL (80 aa). C2H2-type zinc fingers lie at residues 193-215 and 221-243; these read YVCM…MVTH and HECK…HRRH. The C2H2-type 3; degenerate zinc-finger motif lies at 249–273; the sequence is YKCAKCGKSFRESGALTRHLKSLTP. The mediates interaction with CDKN2A stretch occupies residues 368-565; it reads NLLHQAMQNS…REKGSLVRHV (198 aa). Residues 386–407 are disordered; the sequence is GEESALEPAPPSGSSPQCLGDG. 5 C2H2-type zinc fingers span residues 434–456, 462–484, 490–512, 518–540, and 546–568; these read HPCP…KRGH, FTCT…QEVH, FRCG…RRVH, FPCP…FRTH, and HVCQ…VRHH. The tract at residues 434-598 is interaction with BMI1; the sequence is HPCPQCSETF…LNRHLRTKGG (165 aa). The mediates interaction with TP53 stretch occupies residues 520–579; sequence CPQCGKRYKTKNAQQVHFRTHLEEKPHVCQFCSRGFREKGSLVRHVRHHTGEKPFKCYKC. The C2H2-type 9; degenerate zinc-finger motif lies at 574–596; it reads FKCYKCGRGFAEHGTLNRHLRTK. Residues 574–596 form a mediates interaction with RASSF1 region; sequence FKCYKCGRGFAEHGTLNRHLRTK.

As to quaternary structure, homodimer; binds DNA as a dimer. Forms a complex with CDKN2A and TP53. Interacts with HDAC1, HMGA2 and RASSF1. Interactions with TP53, RB1, ANP32A and probably BMI1 and FHL2 regulate E4F1 activity. In terms of processing, phosphorylated; phosphorylation is cell cycle-dependent and regulates DNA-binding activity and function. May be sumoylated by UBE2I upon interaction with CDKN2A. In terms of tissue distribution, ubiquitously expressed.

The protein localises to the nucleus. Its subcellular location is the nucleoplasm. It is found in the cytoplasm. It catalyses the reaction S-ubiquitinyl-[E2 ubiquitin-conjugating enzyme]-L-cysteine + [acceptor protein]-L-lysine = [E2 ubiquitin-conjugating enzyme]-L-cysteine + N(6)-ubiquitinyl-[acceptor protein]-L-lysine.. Its pathway is protein modification; protein ubiquitination. May function as a transcriptional repressor. May also function as a ubiquitin ligase mediating ubiquitination of chromatin-associated TP53. Functions in cell survival and proliferation through control of the cell cycle. Functions in the p53 and pRB tumor suppressor pathways and regulates the cyclin CCNA2 transcription. This Mus musculus (Mouse) protein is Transcription factor E4F1 (E4f1).